The sequence spans 379 residues: GPN-loop GTPase QQT2 (379 aa).

At M1 the chain carries N-acetylmethionine. 51–56 contributes to the GTP binding site; that stretch reads GSGKTS. The Gly-Pro-Asn (GPN)-loop; involved in dimer interface signature appears at 108 to 110; the sequence is GPN. GTP is bound by residues 211–214 and A267; that span reads NKTD. The stretch at 288–322 forms a coiled coil; it reads METYKADLDMRKADKERLEEERKKHEMEKLRKDME. Basic and acidic residues-rich tracts occupy residues 303–322 and 335–346; these read ERLEEERKKHEMEKLRKDME and LKDRDATEKMML. The interval 303–379 is disordered; the sequence is ERLEEERKKH…EDDETKHYYL (77 aa). The span at 347-372 shows a compositional bias: acidic residues; that stretch reads EEDDEDFQVEDEEDSDDAIDEDDEDD.

This sequence belongs to the GPN-loop GTPase family. As to quaternary structure, heterodimer with QQT1. In terms of tissue distribution, expressed in individual cells of roots, leaves and flowers.

It localises to the cytoplasm. The protein localises to the nucleus. Its subcellular location is the cytoskeleton. The protein resides in the spindle. It is found in the phragmoplast. In terms of biological role, small GTPase that is essential for the correct formation of the tangential divisions in early embryos. Associates with microtubule during mitosis and may function in the positioning of the division plane. May participate in the patterning of the early embryo at the octant-dermatogen transition. This chain is GPN-loop GTPase QQT2, found in Arabidopsis thaliana (Mouse-ear cress).